The chain runs to 648 residues: Penicillin-binding protein PbpB (648 aa).

The segment at 1–35 is disordered; sequence MSRRGDRPRTPAQPRKKARVDQPRSARTRRTRVSE. Residues 52 to 72 form a helical membrane-spanning segment; it reads GNLAILAVLVIAAVQLFMLQV. Ser355 (acyl-ester intermediate) is an active-site residue.

Belongs to the transpeptidase family. As to quaternary structure, interacts with Wag31.

The protein localises to the cell membrane. The sequence is that of Penicillin-binding protein PbpB (pbpB) from Mycolicibacterium smegmatis (strain ATCC 700084 / mc(2)155) (Mycobacterium smegmatis).